Consider the following 186-residue polypeptide: Transcription factor FapR (186 aa).

It belongs to the FapR family.

Transcriptional factor involved in regulation of membrane lipid biosynthesis by repressing genes involved in fatty acid and phospholipid metabolism. This chain is Transcription factor FapR, found in Staphylococcus epidermidis (strain ATCC 35984 / DSM 28319 / BCRC 17069 / CCUG 31568 / BM 3577 / RP62A).